The sequence spans 148 residues: Snaclec alboaggregin-D subunit beta (148 aa).

Positions 1 to 23 (MGRFISVSFGLLVVFLSLSGAGA) are cleaved as a signal peptide. An intrachain disulfide couples cysteine 27 to cysteine 38. The 112-residue stretch at 34–145 (YDLYCYKVFK…CNSTYSFVCK (112 aa)) folds into the C-type lectin domain. An N-linked (GlcNAc...) asparagine glycan is attached at asparagine 47. Intrachain disulfides connect cysteine 55-cysteine 144 and cysteine 121-cysteine 136. An N-linked (GlcNAc...) asparagine glycan is attached at asparagine 137.

Tetramer of heterodimers of alpha and beta subunits (alphabeta)(4); disulfide-linked. In terms of tissue distribution, expressed by the venom gland.

Its subcellular location is the secreted. Functionally, snaclec that induces human platelet aggregation in the absence of any cofactor with the EC(50) of 0.25 nM and causes tyrosine phosphorylation in human platelets. Antibodies against either platelet GPIbalpha (GP1BA) or GPVI (GP6) inhibit alboaggregin D-induced platelet aggregation. Only the combination of these two antibodies completely inhibit aggregation, suggesting that it acts through both GPIbalpha (GP1BA) and GPVI (GP6). This is Snaclec alboaggregin-D subunit beta from Trimeresurus albolabris (White-lipped pit viper).